We begin with the raw amino-acid sequence, 835 residues long: Invasin (835 aa).

In terms of domain architecture, Big-1 spans 451–541 (VITSEVTDDG…QQATVDVRFA (91 aa)).

This sequence belongs to the intimin/invasin family.

The protein localises to the cell outer membrane. Invasin is a protein that allows enteric bacteria to penetrate cultured mammalian cells. The entry of invasin in the cell is mediated by binding several beta-1 chain integrins. The polypeptide is Invasin (Yersinia enterocolitica).